Reading from the N-terminus, the 60-residue chain is Metallothionein A (60 aa).

A beta region spans residues M1 to C28. Residues C4, C6, C12, C14, C18, C20, C23, C25, C28, C32, C33, C35, C36, C40, C43, C47, C49, C54, C58, and C59 each coordinate a divalent metal cation. Residues K29–Q60 are alpha.

This sequence belongs to the metallothionein superfamily. Type 1 family.

In terms of biological role, metallothioneins have a high content of cysteine residues that bind various heavy metals. The protein is Metallothionein A (mta) of Chaenocephalus aceratus (Blackfin icefish).